The following is a 106-amino-acid chain: uncharacterized protein (106 aa).

Disordered regions lie at residues 33–64 (FKTS…SRND) and 87–106 (NLTG…AVSK). Basic and acidic residues predominate over residues 52 to 63 (DGKKQESLESRN). Positions 87–99 (NLTGLESGGSSPP) are enriched in polar residues.

The protein resides in the mitochondrion. This is an uncharacterized protein from Arabidopsis thaliana (Mouse-ear cress).